The following is a 696-amino-acid chain: Glycine--tRNA ligase beta subunit (696 aa).

The protein belongs to the class-II aminoacyl-tRNA synthetase family. As to quaternary structure, tetramer of two alpha and two beta subunits.

It is found in the cytoplasm. It carries out the reaction tRNA(Gly) + glycine + ATP = glycyl-tRNA(Gly) + AMP + diphosphate. This is Glycine--tRNA ligase beta subunit from Aromatoleum aromaticum (strain DSM 19018 / LMG 30748 / EbN1) (Azoarcus sp. (strain EbN1)).